Consider the following 533-residue polypeptide: Glucomannan 4-beta-mannosyltransferase 9 (533 aa).

A helical membrane pass occupies residues 37-57 (IVPALRLGVYICLTMSVMLFV). The active site involves aspartate 136. Positions 195 and 197 each coordinate substrate. Aspartate 289 is an active-site residue. 4 helical membrane passes run 368 to 388 (LVAH…TVLV), 404 to 426 (VITL…WILF), 483 to 503 (VLEL…AFFG), and 510 to 530 (YLFA…GTIV).

Belongs to the glycosyltransferase 2 family. Plant cellulose synthase-like A subfamily. As to expression, expressed in cotyledons at the base of the hypocotyls, in root elongation zone, lateral root primordia, vascular system of young leaves, abscission zone of the pedicle,.

Its subcellular location is the golgi apparatus membrane. The catalysed reaction is GDP-mannose + (glucomannan)n = GDP + (glucomannan)n+1.. Possesses glucomannan synthase and mannan synthase activities in vitro. Mannan synthase consists of a 4-beta-mannosyltransferase activity on mannan using GDP-mannose. The beta-1,4-mannan product is the backbone for galactomannan synthesis by galactomannan galactosyltransferase. Galactomannan is a noncellulosic polysaccharides of plant cell wall. Required for lateral root development. This Arabidopsis thaliana (Mouse-ear cress) protein is Glucomannan 4-beta-mannosyltransferase 9.